We begin with the raw amino-acid sequence, 463 residues long: Asparagine--tRNA ligase (463 aa).

This sequence belongs to the class-II aminoacyl-tRNA synthetase family. Homodimer.

Its subcellular location is the cytoplasm. The catalysed reaction is tRNA(Asn) + L-asparagine + ATP = L-asparaginyl-tRNA(Asn) + AMP + diphosphate + H(+). The sequence is that of Asparagine--tRNA ligase from Bacillus thuringiensis subsp. konkukian (strain 97-27).